We begin with the raw amino-acid sequence, 102 residues long: Small ribosomal subunit protein uS10 (102 aa).

This sequence belongs to the universal ribosomal protein uS10 family. As to quaternary structure, part of the 30S ribosomal subunit.

Its function is as follows. Involved in the binding of tRNA to the ribosomes. In Listeria innocua serovar 6a (strain ATCC BAA-680 / CLIP 11262), this protein is Small ribosomal subunit protein uS10.